We begin with the raw amino-acid sequence, 1095 residues long: Putative disease resistance protein At4g11170 (1095 aa).

Positions 9 to 173 (WRYDVFPSFR…TISKDVLEKL (165 aa)) constitute a TIR domain. Glu84 is an active-site residue. The NB-ARC domain occupies 168 to 454 (DVLEKLNATP…HENYLKQMII (287 aa)). LRR repeat units lie at residues 609 to 631 (CLVE…QPLR), 632 to 654 (NLRT…MEAT), 655 to 677 (KLNR…IKNL), 679 to 701 (HLIL…INLP), 702 to 722 (SLEV…EIST), and 723 to 744 (NIRL…VKYW).

The catalysed reaction is NAD(+) + H2O = ADP-D-ribose + nicotinamide + H(+). The polypeptide is Putative disease resistance protein At4g11170 (Arabidopsis thaliana (Mouse-ear cress)).